We begin with the raw amino-acid sequence, 407 residues long: Tryptophan synthase beta chain (407 aa).

An N6-(pyridoxal phosphate)lysine modification is found at lysine 98.

This sequence belongs to the TrpB family. In terms of assembly, tetramer of two alpha and two beta chains. The cofactor is pyridoxal 5'-phosphate.

The enzyme catalyses (1S,2R)-1-C-(indol-3-yl)glycerol 3-phosphate + L-serine = D-glyceraldehyde 3-phosphate + L-tryptophan + H2O. Its pathway is amino-acid biosynthesis; L-tryptophan biosynthesis; L-tryptophan from chorismate: step 5/5. In terms of biological role, the beta subunit is responsible for the synthesis of L-tryptophan from indole and L-serine. This chain is Tryptophan synthase beta chain, found in Bradyrhizobium sp. (strain ORS 278).